The sequence spans 117 residues: Large ribosomal subunit protein bL19 (117 aa).

The protein belongs to the bacterial ribosomal protein bL19 family.

Functionally, this protein is located at the 30S-50S ribosomal subunit interface and may play a role in the structure and function of the aminoacyl-tRNA binding site. This is Large ribosomal subunit protein bL19 from Methylibium petroleiphilum (strain ATCC BAA-1232 / LMG 22953 / PM1).